The chain runs to 208 residues: Small ribosomal subunit protein uS4 (208 aa).

In terms of domain architecture, S4 RNA-binding spans 98 to 160; sequence CRLDNVVYRM…AKKQSRIQLA (63 aa).

The protein belongs to the universal ribosomal protein uS4 family. Part of the 30S ribosomal subunit. Contacts protein S5. The interaction surface between S4 and S5 is involved in control of translational fidelity.

Functionally, one of the primary rRNA binding proteins, it binds directly to 16S rRNA where it nucleates assembly of the body of the 30S subunit. Its function is as follows. With S5 and S12 plays an important role in translational accuracy. This chain is Small ribosomal subunit protein uS4, found in Vesicomyosocius okutanii subsp. Calyptogena okutanii (strain HA).